The following is a 538-amino-acid chain: Metal transporter Nramp5 (538 aa).

The next 12 helical transmembrane spans lie at 44 to 64, 77 to 97, 118 to 138, 140 to 160, 181 to 201, 227 to 247, 264 to 284, 324 to 346, 365 to 385, 391 to 411, 427 to 447, and 467 to 487; these read FLAH…PGNL, ELLW…SLAA, FVKI…DIPE, IGTA…GVLI, FLIS…LSIV, IALL…ALVL, FFLY…IAVV, SAIV…GTYA, NLMT…IGGS, LIII…IPLL, IYII…NMYF, and VLVG…VVYL. The tract at residues 518–538 is disordered; that stretch reads AVDDDEPLPYRDDLADIPLPR.

The protein belongs to the NRAMP (TC 2.A.55) family.

It localises to the membrane. Its function is as follows. Probable metal transporter. The chain is Metal transporter Nramp5 (NRAMP5) from Oryza sativa subsp. japonica (Rice).